Reading from the N-terminus, the 3165-residue chain is Protein eyes shut homolog (3165 aa).

The signal sequence occupies residues Met-1–Gly-21. Residues Asn-42, Asn-105, Asn-117, and Asn-166 are each glycosylated (N-linked (GlcNAc...) asparagine). EGF-like domains lie at Lys-170–Gln-212, Glu-213–Ser-254, and Ile-256–Glu-292. 9 disulfides stabilise this stretch: Cys-174/Cys-189, Cys-183/Cys-200, Cys-202/Cys-211, Cys-217/Cys-228, Cys-222/Cys-242, Cys-244/Cys-253, Cys-260/Cys-270, Cys-265/Cys-280, and Cys-282/Cys-291. Asn-252, Asn-269, and Asn-272 each carry an N-linked (GlcNAc...) asparagine glycan. Asn-311 and Asn-343 each carry an N-linked (GlcNAc...) asparagine glycan. 2 consecutive EGF-like domains span residues Asp-332–Lys-368 and Phe-370–Glu-406. Intrachain disulfides connect Cys-341/Cys-356 and Cys-358/Cys-367. A glycan (N-linked (GlcNAc...) asparagine) is linked at Asn-382. Cys-396 and Cys-405 are disulfide-bonded. N-linked (GlcNAc...) asparagine glycosylation is found at Asn-506, Asn-520, Asn-521, Asn-566, and Asn-573. EGF-like domains follow at residues Asn-566 to Val-602, Asn-604 to Glu-641, and Asp-643 to Glu-679. Disulfide bonds link Cys-592–Cys-601 and Cys-608–Cys-620. Residues Asn-611 and Asn-628 are each glycosylated (N-linked (GlcNAc...) asparagine). Cys-629 and Cys-640 are oxidised to a cystine. An N-linked (GlcNAc...) asparagine glycan is attached at Asn-654. Disulfide bonds link Cys-669-Cys-678, Cys-685-Cys-696, Cys-690-Cys-705, and Cys-707-Cys-719. The region spanning Asp-681–Leu-720 is the EGF-like 9; calcium-binding domain. An EGF-like 10 domain is found at Asn-733–Glu-769. The N-linked (GlcNAc...) asparagine glycan is linked to Asn-745. Cystine bridges form between Cys-759/Cys-768, Cys-775/Cys-786, Cys-780/Cys-795, Cys-797/Cys-806, Cys-813/Cys-824, Cys-818/Cys-835, Cys-837/Cys-846, Cys-853/Cys-866, Cys-860/Cys-876, Cys-878/Cys-887, Cys-894/Cys-905, Cys-899/Cys-914, Cys-916/Cys-925, Cys-932/Cys-943, Cys-937/Cys-952, Cys-954/Cys-963, Cys-970/Cys-981, Cys-975/Cys-990, Cys-992/Cys-1001, Cys-1008/Cys-1019, Cys-1013/Cys-1028, Cys-1030/Cys-1039, Cys-1046/Cys-1056, Cys-1051/Cys-1065, Cys-1067/Cys-1076, Cys-1083/Cys-1094, Cys-1088/Cys-1103, Cys-1105/Cys-1114, Cys-1121/Cys-1137, Cys-1131/Cys-1147, Cys-1149/Cys-1158, Cys-1165/Cys-1176, Cys-1170/Cys-1185, and Cys-1187/Cys-1196. Residues Glu-771–Ser-807 enclose the EGF-like 11; calcium-binding domain. 3 N-linked (GlcNAc...) asparagine glycosylation sites follow: Asn-782, Asn-783, and Asn-805. 3 consecutive EGF-like domains span residues Glu-809–His-847, Arg-849–Glu-888, and Asp-890–Glu-926. N-linked (GlcNAc...) asparagine glycans are attached at residues Asn-862 and Asn-863. The EGF-like 15; calcium-binding domain occupies Glu-928 to Glu-964. Asn-940 carries N-linked (GlcNAc...) asparagine glycosylation. One can recognise an EGF-like 16 domain in the interval Glu-966–Glu-1002. Residues Asn-1004–Glu-1040 form the EGF-like 17; calcium-binding domain. EGF-like domains lie at Asn-1042–Lys-1077, Lys-1079–Glu-1115, and Ser-1117–Glu-1159. In terms of domain architecture, EGF-like 21; calcium-binding spans Asn-1161–Glu-1197. 4 N-linked (GlcNAc...) asparagine glycosylation sites follow: Asn-1509, Asn-1906, Asn-1941, and Asn-2033. A Laminin G-like 1 domain is found at Phe-1883–Cys-2063. 4 cysteine pairs are disulfide-bonded: Cys-2037–Cys-2063, Cys-2103–Cys-2114, Cys-2108–Cys-2128, and Cys-2130–Cys-2139. Residues Ala-2099–Glu-2140 form the EGF-like 22 domain. The Laminin G-like 2 domain occupies Leu-2145–Cys-2339. N-linked (GlcNAc...) asparagine glycosylation is found at Asn-2170, Asn-2185, and Asn-2228. 6 disulfide bridges follow: Cys-2308–Cys-2339, Cys-2339–Cys-2350, Cys-2344–Cys-2359, Cys-2375–Cys-2386, Cys-2380–Cys-2396, and Cys-2398–Cys-2407. EGF-like domains are found at residues His-2335–Lys-2368 and Gln-2371–Thr-2408. Asn-2347 carries N-linked (GlcNAc...) asparagine glycosylation. Residues Asn-2412, Asn-2453, Asn-2484, Asn-2506, and Asn-2532 are each glycosylated (N-linked (GlcNAc...) asparagine). The Laminin G-like 3 domain occupies Ser-2419 to Cys-2609. Cystine bridges form between Cys-2576–Cys-2609, Cys-2614–Cys-2625, and Cys-2619–Cys-2634. 2 EGF-like domains span residues His-2610–Thr-2646 and Thr-2648–Glu-2689. Residue Asn-2635 is glycosylated (N-linked (GlcNAc...) asparagine). 4 disulfides stabilise this stretch: Cys-2636/Cys-2645, Cys-2652/Cys-2668, Cys-2662/Cys-2677, and Cys-2679/Cys-2688. Positions Asp-2717–Cys-2895 constitute a Laminin G-like 4 domain. N-linked (GlcNAc...) asparagine glycosylation is found at Asn-2775, Asn-2800, and Asn-2824. 4 cysteine pairs are disulfide-bonded: Cys-2868-Cys-2895, Cys-2900-Cys-2911, Cys-2905-Cys-2920, and Cys-2922-Cys-2931. 2 EGF-like domains span residues Asp-2896 to Asn-2932 and Gln-2933 to Glu-2970. Asn-2914 carries N-linked (GlcNAc...) asparagine glycosylation. N-linked (GlcNAc...) asparagine glycosylation is present at Asn-2932. 3 disulfide bridges follow: Cys-2937/Cys-2948, Cys-2942/Cys-2958, and Cys-2960/Cys-2969. N-linked (GlcNAc...) asparagine glycans are attached at residues Asn-2971, Asn-3006, Asn-3036, Asn-3057, Asn-3073, and Asn-3082. The 191-residue stretch at Phe-2975–Thr-3165 folds into the Laminin G-like 5 domain.

This sequence belongs to the EYS family. Expressed in retina (at protein level).

Its subcellular location is the cell projection. It is found in the cilium. It localises to the photoreceptor outer segment. The protein localises to the cytoplasm. The protein resides in the cytoskeleton. Its subcellular location is the cilium axoneme. It is found in the microtubule organizing center. It localises to the centrosome. The protein localises to the secreted. The protein resides in the extracellular space. Its subcellular location is the extracellular matrix. It is found in the interphotoreceptor matrix. Functionally, required to maintain the integrity of photoreceptor cells. Specifically required for normal morphology of the photoreceptor ciliary pocket, and might thus facilitate protein trafficking between the photoreceptor inner and outer segments via the transition zone. The polypeptide is Protein eyes shut homolog (Macaca fascicularis (Crab-eating macaque)).